The following is a 157-amino-acid chain: Lipoprotein signal peptidase (157 aa).

The next 3 helical transmembrane spans lie at 10 to 30 (LVFM…KYAI), 58 to 78 (FLEG…FIFL), and 84 to 104 (LFKN…SNVL). Catalysis depends on residues Asp114 and Asp131. The helical transmembrane segment at 122-142 (FDFAIFNFADVMIDVGVGVLL) threads the bilayer.

The protein belongs to the peptidase A8 family.

It localises to the cell inner membrane. The enzyme catalyses Release of signal peptides from bacterial membrane prolipoproteins. Hydrolyzes -Xaa-Yaa-Zaa-|-(S,diacylglyceryl)Cys-, in which Xaa is hydrophobic (preferably Leu), and Yaa (Ala or Ser) and Zaa (Gly or Ala) have small, neutral side chains.. It participates in protein modification; lipoprotein biosynthesis (signal peptide cleavage). Functionally, this protein specifically catalyzes the removal of signal peptides from prolipoproteins. This chain is Lipoprotein signal peptidase, found in Helicobacter pylori (strain ATCC 700392 / 26695) (Campylobacter pylori).